Consider the following 432-residue polypeptide: Trigger factor (432 aa).

The region spanning 161–246 (DDRVTIDFVG…LKKIENMVLP (86 aa)) is the PPIase FKBP-type domain.

Belongs to the FKBP-type PPIase family. Tig subfamily.

It is found in the cytoplasm. The enzyme catalyses [protein]-peptidylproline (omega=180) = [protein]-peptidylproline (omega=0). Functionally, involved in protein export. Acts as a chaperone by maintaining the newly synthesized protein in an open conformation. Functions as a peptidyl-prolyl cis-trans isomerase. This Haemophilus influenzae (strain 86-028NP) protein is Trigger factor.